A 299-amino-acid polypeptide reads, in one-letter code: DNA-binding transcriptional repressor CapW (299 aa).

Positions 1 to 84 (MESSGSSKVR…EFKPITKRSE (84 aa)) are winged HTH domain. Positions 85-196 (ATRYLNELQR…IGRLDVLEHV (112 aa)) are WYL domain. Residues 120 to 200 (SRAIEADEVA…DVLEHVFSAK (81 aa)) enclose the WYL domain. The probable ligand-binding region stretch occupies residues 145 to 189 (YQSMDAPEPQEWVLSPHALGFDGLRWHARAWCHARQVFRDFAIGR). Residues 197 to 299 (FSAKPVDPLL…DRDGLQHLRR (103 aa)) are WCX domain.

As to quaternary structure, homodimer.

In terms of biological role, transcriptional regulator of a CBASS antivirus system. CBASS (cyclic oligonucleotide-based antiphage signaling system) provides immunity against bacteriophage. The CD-NTase protein synthesizes cyclic nucleotides in response to infection; these serve as specific second messenger signals. The signals activate a diverse range of effectors, leading to bacterial cell death and thus abortive phage infection. A type III CBASS system, part of a CapW-Cap6-Cap8-Cap7-CdnC-NucC locus. Binds specifically to palindromes that overlap the -10 site in the promoter of cap6, found beween found between the genes for divergently transcribed capW and cap6 (cognate DNA). Probably represses transcription bidirectionally from the promoter. Mutations that make it a constitutive repressor in E.coli do not change DNA-binding affinity. This is DNA-binding transcriptional repressor CapW from Stenotrophomonas maltophilia (Pseudomonas maltophilia).